A 28-amino-acid polypeptide reads, in one-letter code: M-ectatotoxin-Eb2c (28 aa).

In terms of tissue distribution, expressed by the venom gland.

Its subcellular location is the secreted. Its function is as follows. Antimicrobial peptide active against Gram-negative bacterium E.coli MH1 (MIC=3.5 uM) and P.aeruginosa PAO1 (MIC=10 uM) and against Gram-positive bacterium A.globiformis VKM Ac-1112 (MIC=1.25 uM). The sequence is that of M-ectatotoxin-Eb2c from Ectatomma brunneum (Ant).